The primary structure comprises 251 residues: Imidazole glycerol phosphate synthase subunit HisF (251 aa).

Residues Asp11 and Asp130 contribute to the active site.

The protein belongs to the HisA/HisF family. Heterodimer of HisH and HisF.

It is found in the cytoplasm. The enzyme catalyses 5-[(5-phospho-1-deoxy-D-ribulos-1-ylimino)methylamino]-1-(5-phospho-beta-D-ribosyl)imidazole-4-carboxamide + L-glutamine = D-erythro-1-(imidazol-4-yl)glycerol 3-phosphate + 5-amino-1-(5-phospho-beta-D-ribosyl)imidazole-4-carboxamide + L-glutamate + H(+). The protein operates within amino-acid biosynthesis; L-histidine biosynthesis; L-histidine from 5-phospho-alpha-D-ribose 1-diphosphate: step 5/9. Its function is as follows. IGPS catalyzes the conversion of PRFAR and glutamine to IGP, AICAR and glutamate. The HisF subunit catalyzes the cyclization activity that produces IGP and AICAR from PRFAR using the ammonia provided by the HisH subunit. This Bacteroides thetaiotaomicron (strain ATCC 29148 / DSM 2079 / JCM 5827 / CCUG 10774 / NCTC 10582 / VPI-5482 / E50) protein is Imidazole glycerol phosphate synthase subunit HisF.